The primary structure comprises 124 residues: Large ribosomal subunit protein bL12 (124 aa).

It belongs to the bacterial ribosomal protein bL12 family. Homodimer. Part of the ribosomal stalk of the 50S ribosomal subunit. Forms a multimeric L10(L12)X complex, where L10 forms an elongated spine to which 2 to 4 L12 dimers bind in a sequential fashion. Binds GTP-bound translation factors.

Forms part of the ribosomal stalk which helps the ribosome interact with GTP-bound translation factors. Is thus essential for accurate translation. In Desulfitobacterium hafniense (strain DSM 10664 / DCB-2), this protein is Large ribosomal subunit protein bL12.